The following is a 285-amino-acid chain: MASKQRENVFPTRMTLTTMKTRLKGAQTGHSLLKRKSEALKKRFREIVVNIEQAKQKMGRVMQIAAFSMAEVGFAMGNNINFEIQQSVKQPRLRVRSKQENISGVFLPTFEMNLDESIDDFQLTGLGKGGQQIQKARQVYEKAVETLVQLASYQSAFVLLGDVLQMTNRRVNSIEHIIIPRLENTIKYIESELEELEREDFTRLKKVQKTKENAEKADSVTKEEHQGGSNTLQQTKDVGGAIAPAAEVGKEVINEVENSKDDTYSLPSTSTDDEEENDSDEEVIF.

Over residues Q208–Q226 the composition is skewed to basic and acidic residues. Residues Q208–F285 are disordered. Residue S219 is modified to Phosphoserine. Positions G227 to K236 are enriched in polar residues. Positions V248–T263 are enriched in basic and acidic residues. The span at T271–F285 shows a compositional bias: acidic residues.

It belongs to the V-ATPase D subunit family. V-ATPase is a heteromultimeric enzyme composed of a peripheral catalytic V1 complex (components A to H) attached to an integral membrane V0 proton pore complex (components: a, c, c', c'', d, e, f and VOA1).

It is found in the vacuole membrane. Its function is as follows. Subunit of the V1 complex of vacuolar(H+)-ATPase (V-ATPase), a multisubunit enzyme composed of a peripheral complex (V1) that hydrolyzes ATP and a membrane integral complex (V0) that translocates protons. V-ATPase is responsible for acidifying and maintaining the pH of intracellular compartments. This Schizosaccharomyces pombe (strain 972 / ATCC 24843) (Fission yeast) protein is V-type proton ATPase subunit D (vma8).